A 326-amino-acid polypeptide reads, in one-letter code: Zinc finger CCCH domain-containing protein 15 (326 aa).

A compositionally biased stretch (gly residues) spans 1 to 14 (MADGGGGGEAGSGG). The interval 1–142 (MADGGGGGEA…SSSGSGSGEV (142 aa)) is disordered. The span at 24–33 (KPPKNIRKRP) shows a compositional bias: basic residues. A compositionally biased stretch (low complexity) spans 47–64 (SGAIAAARAKKAPSSTSK). Residues 81 to 100 (YESSRTIQASTDSRATATLE) show a composition bias toward polar residues. Residues 104–125 (EFDRDARAIRERQLKQAEESLK) show a composition bias toward basic and acidic residues. Residues 187-215 (DYQPDICKDYKETGYCGYGDSCKFMHDRG) form a C3H1-type zinc finger. An RING-type zinc finger spans residues 265 to 303 (CYICREPFVDPVVTKCKHYFCEHCALKHHSKNKKCFVCN).

This Oryza sativa subsp. japonica (Rice) protein is Zinc finger CCCH domain-containing protein 15.